The primary structure comprises 258 residues: Malonyl-[acyl-carrier protein] O-methyltransferase (258 aa).

The protein belongs to the methyltransferase superfamily.

It catalyses the reaction malonyl-[ACP] + S-adenosyl-L-methionine = malonyl-[ACP] methyl ester + S-adenosyl-L-homocysteine. The protein operates within cofactor biosynthesis; biotin biosynthesis. In terms of biological role, converts the free carboxyl group of a malonyl-thioester to its methyl ester by transfer of a methyl group from S-adenosyl-L-methionine (SAM). It allows to synthesize pimeloyl-ACP via the fatty acid synthetic pathway. The protein is Malonyl-[acyl-carrier protein] O-methyltransferase of Haemophilus ducreyi (strain 35000HP / ATCC 700724).